The chain runs to 268 residues: Speedy protein E4A (268 aa).

Disordered stretches follow at residues methionine 1–valine 26 and leucine 43–glutamate 97. A compositionally biased stretch (polar residues) spans leucine 43–proline 52. The interval proline 134 to threonine 265 is speedy/Ringo box; Required for CDK-binding.

This sequence belongs to the Speedy/Ringo family. Interacts with CDK1. Does not interact with CDK2 in vivo. Testis-specific.

Its subcellular location is the nucleus. Functionally, promotes progression through the cell cycle via binding and activation of CDK1. This is Speedy protein E4A from Mus musculus (Mouse).